The sequence spans 334 residues: 5-formaminoimidazole-4-carboxamide-1-(beta)-D-ribofuranosyl 5'-monophosphate synthetase (334 aa).

Residues serine 10, histidine 11, serine 71, and histidine 75 each coordinate 5-amino-1-(5-phospho-beta-D-ribosyl)imidazole-4-carboxamide. One can recognise an ATP-grasp domain in the interval 78–325 (IELVENMKVP…IAMEIREAIE (248 aa)). ATP-binding positions include 132–142 (KPHGAKGGKGY), 173–176 (QEYV), and glutamate 204. Position 232 (asparagine 232) interacts with 5-amino-1-(5-phospho-beta-D-ribosyl)imidazole-4-carboxamide. Residues glutamate 270 and glutamate 283 each contribute to the Mg(2+) site.

Belongs to the phosphohexose mutase family. In terms of assembly, homotrimer and homohexamer. Mg(2+) serves as cofactor. It depends on Mn(2+) as a cofactor.

The enzyme catalyses 5-amino-1-(5-phospho-beta-D-ribosyl)imidazole-4-carboxamide + formate + ATP = 5-formamido-1-(5-phospho-D-ribosyl)imidazole-4-carboxamide + ADP + phosphate. Its pathway is purine metabolism; IMP biosynthesis via de novo pathway; 5-formamido-1-(5-phospho-D-ribosyl)imidazole-4-carboxamide from 5-amino-1-(5-phospho-D-ribosyl)imidazole-4-carboxamide (formate route): step 1/1. In terms of biological role, catalyzes the ATP- and formate-dependent formylation of 5-aminoimidazole-4-carboxamide-1-beta-d-ribofuranosyl 5'-monophosphate (AICAR) to 5-formaminoimidazole-4-carboxamide-1-beta-d-ribofuranosyl 5'-monophosphate (FAICAR) in the absence of folates. The protein is 5-formaminoimidazole-4-carboxamide-1-(beta)-D-ribofuranosyl 5'-monophosphate synthetase of Pyrococcus furiosus (strain ATCC 43587 / DSM 3638 / JCM 8422 / Vc1).